Here is a 96-residue protein sequence, read N- to C-terminus: uncharacterized protein (96 aa).

The HTH cro/C1-type domain occupies 38 to 91; sequence IEQLRKGTGLKIDDFARVLGVSVAMVKEWESRRVKPSSAELKLMRLIQANPALS. The segment at residues 49 to 68 is a DNA-binding region (H-T-H motif); that stretch reads IDDFARVLGVSVAMVKEWES.

This is an uncharacterized protein from Escherichia coli O157:H7.